Consider the following 732-residue polypeptide: Polyribonucleotide nucleotidyltransferase (732 aa).

Mg(2+) is bound by residues Asp483 and Asp489. In terms of domain architecture, KH spans 550–609 (PRIVTVQIPVDKIGELIGPKGKNIRGIQDETGAELSVEDDGTVTIAAVGGDSMERAKQMV). The region spanning 619–687 (GETYEGTVKT…ERGRLRLSMK (69 aa)) is the S1 motif domain. A disordered region spans residues 684–732 (LSMKALLPKPEGMPDEPPQSERPRRDDGERSGGDRGGRGGRNGGGRDRR). Residues 702 to 720 (QSERPRRDDGERSGGDRGG) show a composition bias toward basic and acidic residues.

Belongs to the polyribonucleotide nucleotidyltransferase family. Requires Mg(2+) as cofactor.

The protein localises to the cytoplasm. It catalyses the reaction RNA(n+1) + phosphate = RNA(n) + a ribonucleoside 5'-diphosphate. Involved in mRNA degradation. Catalyzes the phosphorolysis of single-stranded polyribonucleotides processively in the 3'- to 5'-direction. The chain is Polyribonucleotide nucleotidyltransferase from Gemmatimonas aurantiaca (strain DSM 14586 / JCM 11422 / NBRC 100505 / T-27).